Reading from the N-terminus, the 249-residue chain is 1-(5-phosphoribosyl)-5-[(5-phosphoribosylamino)methylideneamino] imidazole-4-carboxamide isomerase (249 aa).

D11 (proton acceptor) is an active-site residue. The Proton donor role is filled by D133.

This sequence belongs to the HisA/HisF family.

It localises to the cytoplasm. The catalysed reaction is 1-(5-phospho-beta-D-ribosyl)-5-[(5-phospho-beta-D-ribosylamino)methylideneamino]imidazole-4-carboxamide = 5-[(5-phospho-1-deoxy-D-ribulos-1-ylimino)methylamino]-1-(5-phospho-beta-D-ribosyl)imidazole-4-carboxamide. The protein operates within amino-acid biosynthesis; L-histidine biosynthesis; L-histidine from 5-phospho-alpha-D-ribose 1-diphosphate: step 4/9. The protein is 1-(5-phosphoribosyl)-5-[(5-phosphoribosylamino)methylideneamino] imidazole-4-carboxamide isomerase of Actinobacillus succinogenes (strain ATCC 55618 / DSM 22257 / CCUG 43843 / 130Z).